Here is a 365-residue protein sequence, read N- to C-terminus: Peptide chain release factor 1 (365 aa).

Residue Q242 is modified to N5-methylglutamine.

It belongs to the prokaryotic/mitochondrial release factor family. Methylated by PrmC. Methylation increases the termination efficiency of RF1.

The protein resides in the cytoplasm. In terms of biological role, peptide chain release factor 1 directs the termination of translation in response to the peptide chain termination codons UAG and UAA. The polypeptide is Peptide chain release factor 1 (Fusobacterium nucleatum subsp. nucleatum (strain ATCC 25586 / DSM 15643 / BCRC 10681 / CIP 101130 / JCM 8532 / KCTC 2640 / LMG 13131 / VPI 4355)).